The primary structure comprises 459 residues: Bifunctional protein GlmU (459 aa).

Residues Met1–Arg229 are pyrophosphorylase. UDP-N-acetyl-alpha-D-glucosamine contacts are provided by residues Leu8–Gly11, Lys22, Gln72, and Gly77–Thr78. Asp102 is a Mg(2+) binding site. UDP-N-acetyl-alpha-D-glucosamine contacts are provided by Gly139, Glu154, Asn169, and Asn227. Residue Asn227 participates in Mg(2+) binding. The tract at residues Val230–Asn250 is linker. An N-acetyltransferase region spans residues Gly251–Gln459. UDP-N-acetyl-alpha-D-glucosamine contacts are provided by Arg332 and Lys350. Catalysis depends on His362, which acts as the Proton acceptor. 2 residues coordinate UDP-N-acetyl-alpha-D-glucosamine: Tyr365 and Asn376. Acetyl-CoA is bound by residues Ala379, Asn385–Tyr386, Ser404, Ala422, and Arg439.

It in the N-terminal section; belongs to the N-acetylglucosamine-1-phosphate uridyltransferase family. In the C-terminal section; belongs to the transferase hexapeptide repeat family. As to quaternary structure, homotrimer. It depends on Mg(2+) as a cofactor.

It is found in the cytoplasm. It catalyses the reaction alpha-D-glucosamine 1-phosphate + acetyl-CoA = N-acetyl-alpha-D-glucosamine 1-phosphate + CoA + H(+). The catalysed reaction is N-acetyl-alpha-D-glucosamine 1-phosphate + UTP + H(+) = UDP-N-acetyl-alpha-D-glucosamine + diphosphate. The protein operates within nucleotide-sugar biosynthesis; UDP-N-acetyl-alpha-D-glucosamine biosynthesis; N-acetyl-alpha-D-glucosamine 1-phosphate from alpha-D-glucosamine 6-phosphate (route II): step 2/2. It functions in the pathway nucleotide-sugar biosynthesis; UDP-N-acetyl-alpha-D-glucosamine biosynthesis; UDP-N-acetyl-alpha-D-glucosamine from N-acetyl-alpha-D-glucosamine 1-phosphate: step 1/1. It participates in bacterial outer membrane biogenesis; LPS lipid A biosynthesis. Catalyzes the last two sequential reactions in the de novo biosynthetic pathway for UDP-N-acetylglucosamine (UDP-GlcNAc). The C-terminal domain catalyzes the transfer of acetyl group from acetyl coenzyme A to glucosamine-1-phosphate (GlcN-1-P) to produce N-acetylglucosamine-1-phosphate (GlcNAc-1-P), which is converted into UDP-GlcNAc by the transfer of uridine 5-monophosphate (from uridine 5-triphosphate), a reaction catalyzed by the N-terminal domain. In Streptococcus pneumoniae (strain Hungary19A-6), this protein is Bifunctional protein GlmU.